The primary structure comprises 53 residues: Neuronal protein NP-190 (53 aa).

Mainly expressed in the fetal brain where it is specifically localized to the proximal axonal segments, cell bodies and growth cones. Lower level of expression was also detected in the fetal heart and the skeletal muscle. No expression in kidney, liver, lung or spleen.

It localises to the membrane. Functionally, neuronal antigen that may play a role in brain development. May be involved in neurite formation or axonal guidance. The chain is Neuronal protein NP-190 from Sus scrofa (Pig).